A 227-amino-acid chain; its full sequence is MASHKELVKNGLWDNNPALVQLLGLCPLLAVSATVTNALGLGIATILVLVGSNLIVSLVRQWIPQEVRIPVFVMIIASLVTCVQLLMNAYAYGLYLSLGIFIPLIVTNCIIIGRAESFASKNDPLPAVLDGLWMGMGMTAVLVLLGAMREILGNGTLFDGADLLLGDWATMLRIELFHVDSHFLLAMLPPGAFLGVGFLIALKNVIDKKMADRQPKEKAEIERARIS.

6 helical membrane-spanning segments follow: residues 18-38, 39-59, 69-89, 93-113, 125-145, and 182-202; these read ALVQLLGLCPLLAVSATVTNA, LGLGIATILVLVGSNLIVSLV, IPVFVMIIASLVTCVQLLMNA, GLYLSLGIFIPLIVTNCIIIG, LPAVLDGLWMGMGMTAVLVLL, and HFLLAMLPPGAFLGVGFLIAL.

It belongs to the NqrDE/RnfAE family. The complex is composed of six subunits: RnfA, RnfB, RnfC, RnfD, RnfE and RnfG.

The protein localises to the cell inner membrane. Its function is as follows. Part of a membrane-bound complex that couples electron transfer with translocation of ions across the membrane. In Aliivibrio fischeri (strain ATCC 700601 / ES114) (Vibrio fischeri), this protein is Ion-translocating oxidoreductase complex subunit E.